Here is a 185-residue protein sequence, read N- to C-terminus: Transcriptional repressor NrdR (185 aa).

The interval 1-24 is disordered; sequence MRCPFCGGPDTQVKDSRPSEDSSA. Residues 3–34 fold into a zinc finger; sequence CPFCGGPDTQVKDSRPSEDSSAIRRRRVCPDC. Residues 12-24 show a composition bias toward basic and acidic residues; it reads QVKDSRPSEDSSA. Positions 49-139 constitute an ATP-cone domain; that stretch reads LVVLKRSGKR…VYKNFREAQD (91 aa). The interval 149-185 is disordered; the sequence is ERLEGEGDLPEDGEAAPAPPDEVVAAPRRGRPARKRA. Over residues 176 to 185 the composition is skewed to basic residues; that stretch reads RRGRPARKRA.

It belongs to the NrdR family. The cofactor is Zn(2+).

In terms of biological role, negatively regulates transcription of bacterial ribonucleotide reductase nrd genes and operons by binding to NrdR-boxes. The sequence is that of Transcriptional repressor NrdR from Methylorubrum extorquens (strain PA1) (Methylobacterium extorquens).